We begin with the raw amino-acid sequence, 123 residues long: MAKKRYRKVTEGIAHIKATFNNTMISVSDPQGNVLCFRSAGGSGFKGSRKGTPYGAQMASEEVGRLARDNFDMRRIAVRVKGPGAGRDSAIRGLRSAGLEVIYLEDRTPLPHNGCRPRKKRRV.

It belongs to the universal ribosomal protein uS11 family. As to quaternary structure, part of the 30S ribosomal subunit. Interacts with proteins S7 and S18. Binds to IF-3.

Functionally, located on the platform of the 30S subunit, it bridges several disparate RNA helices of the 16S rRNA. Forms part of the Shine-Dalgarno cleft in the 70S ribosome. This chain is Small ribosomal subunit protein uS11, found in Coxiella burnetii (strain RSA 331 / Henzerling II).